The following is a 116-amino-acid chain: Ribosome-binding factor A (116 aa).

It belongs to the RbfA family. Monomer. Binds 30S ribosomal subunits, but not 50S ribosomal subunits or 70S ribosomes.

The protein resides in the cytoplasm. Functionally, one of several proteins that assist in the late maturation steps of the functional core of the 30S ribosomal subunit. Associates with free 30S ribosomal subunits (but not with 30S subunits that are part of 70S ribosomes or polysomes). Required for efficient processing of 16S rRNA. May interact with the 5'-terminal helix region of 16S rRNA. The chain is Ribosome-binding factor A from Streptococcus pyogenes serotype M28 (strain MGAS6180).